The following is a 409-amino-acid chain: Divalent metal cation transporter MntH (409 aa).

A run of 11 helical transmembrane segments spans residues leucine 19–alanine 39, alanine 46–valine 66, tryptophan 98–isoleucine 118, leucine 122–isoleucine 142, leucine 155–serine 175, alanine 196–histidine 216, isoleucine 241–phenylalanine 261, valine 290–glycine 310, phenylalanine 320–leucine 340, isoleucine 348–leucine 368, and isoleucine 388–leucine 408.

This sequence belongs to the NRAMP family.

Its subcellular location is the cell inner membrane. In terms of biological role, h(+)-stimulated, divalent metal cation uptake system. The chain is Divalent metal cation transporter MntH from Yersinia pseudotuberculosis serotype O:1b (strain IP 31758).